Reading from the N-terminus, the 478-residue chain is Methionine aminopeptidase 2 (478 aa).

The tract at residues 1–122 (MAGVEQAASF…TDPPSVPICD (122 aa)) is disordered. The residue at position 2 (alanine 2) is an N-acetylalanine. Residues 36–46 (KKKRRKKKKGK) show a composition bias toward basic residues. Phosphoserine; alternate is present on serine 60. O-linked (GlcNAc) serine; alternate glycosylation is present at serine 60. Over residues 80–92 (ERDDDDEDGDGDA) the composition is skewed to acidic residues. Basic residues predominate over residues 97-109 (GKKKKKKKKKRGP). Position 231 (histidine 231) interacts with substrate. A divalent metal cation is bound by residues aspartate 251, aspartate 262, and histidine 331. Position 339 (histidine 339) interacts with substrate. The a divalent metal cation site is built by glutamate 364 and glutamate 459.

This sequence belongs to the peptidase M24A family. Methionine aminopeptidase eukaryotic type 2 subfamily. Binds EIF2S1 at low magnesium concentrations. Interacts strongly with the eIF-2 gamma-subunit EIF2S3. The cofactor is Co(2+). Requires Zn(2+) as cofactor. It depends on Mn(2+) as a cofactor. Fe(2+) serves as cofactor. Contains approximately 12 O-linked N-acetylglucosamine (GlcNAc) residues. O-glycosylation is required for EIF2S1 binding.

The protein localises to the cytoplasm. The enzyme catalyses Release of N-terminal amino acids, preferentially methionine, from peptides and arylamides.. Functionally, cotranslationally removes the N-terminal methionine from nascent proteins. The N-terminal methionine is often cleaved when the second residue in the primary sequence is small and uncharged (Met-Ala-, Cys, Gly, Pro, Ser, Thr, or Val). Its function is as follows. Protects eukaryotic initiation factor EIF2S1 from translation-inhibiting phosphorylation by inhibitory kinases such as EIF2AK2/PKR and EIF2AK1/HCR. Plays a critical role in the regulation of protein synthesis. The sequence is that of Methionine aminopeptidase 2 (Metap2) from Mus musculus (Mouse).